The following is a 687-amino-acid chain: Calcium-binding protein SP84 (687 aa).

An N-terminal signal peptide occupies residues 1-19 (MMRAIYLLVVVCWAAAANA). EF-hand domains follow at residues 152–187 (LESD…HKNK), 257–292 (LTEI…TDDV), 406–441 (KTEA…PHMV), 476–511 (IENA…NNDA), and 579–614 (MTER…VKDL). 5 residues coordinate Ca(2+): D592, N594, D596, E598, and D603.

In terms of tissue distribution, expressed in salivary glands where expression is strongest in type III cells in the posterior lobe of the principal glands (at protein level). Not expressed in midgut, Malpighian tubules or epidermis.

The protein resides in the secreted. Its function is as follows. Binds calcium. During feeding of the phloem sap, protein is injected into sieve tubes of rice plants. This process may suppress the sieve-element clogging and facilitate continuous ingestion from sieve tubes. The polypeptide is Calcium-binding protein SP84 (Nephotettix cincticeps (Green rice leafhopper)).